The following is a 72-amino-acid chain: Cytochrome b-c1 complex subunit 9 (72 aa).

Residues 1-27 (MESAARRSGGGVLEGFYRLVMRRTPVY) lie on the Mitochondrial matrix side of the membrane. Residues 28 to 53 (VTFVIAGALLGERAVDYGVKTLWEKN) form a helical membrane-spanning segment. Residues 54 to 72 (NVGKRYEDISVLGQRPVDE) are Mitochondrial intermembrane-facing.

Belongs to the UQCR10/QCR9 family. Component of the ubiquinol-cytochrome c oxidoreductase (cytochrome b-c1 complex, complex III, CIII), a multisubunit enzyme composed of 3 respiratory subunits cytochrome b, cytochrome c1 and Rieske protein, 2 core protein subunits, and additional low-molecular weight protein subunits. The complex exists as an obligatory dimer and forms supercomplexes (SCs) in the inner mitochondrial membrane with cytochrome c oxidase (complex IV, CIV).

Its subcellular location is the mitochondrion inner membrane. Component of the ubiquinol-cytochrome c oxidoreductase, a multisubunit transmembrane complex that is part of the mitochondrial electron transport chain which drives oxidative phosphorylation. The respiratory chain contains 3 multisubunit complexes succinate dehydrogenase (complex II, CII), ubiquinol-cytochrome c oxidoreductase (cytochrome b-c1 complex, complex III, CIII) and cytochrome c oxidase (complex IV, CIV), that cooperate to transfer electrons derived from NADH and succinate to molecular oxygen, creating an electrochemical gradient over the inner membrane that drives transmembrane transport and the ATP synthase. The cytochrome b-c1 complex catalyzes electron transfer from ubiquinol to cytochrome c, linking this redox reaction to translocation of protons across the mitochondrial inner membrane, with protons being carried across the membrane as hydrogens on the quinol. In the process called Q cycle, 2 protons are consumed from the matrix, 4 protons are released into the intermembrane space and 2 electrons are passed to cytochrome c. This is Cytochrome b-c1 complex subunit 9 from Solanum tuberosum (Potato).